The chain runs to 748 residues: Junctophilin-3 (748 aa).

The Cytoplasmic portion of the chain corresponds to M1 to I727. MORN repeat units lie at residues Y15–G37, Y39–T60, Y61–V82, Y83–A105, Y107–T129, and Y130–M152. Residues S230 to D259 form a disordered region. Over residues K231 to F244 the composition is skewed to low complexity. The span at G249–D259 shows a compositional bias: polar residues. 2 MORN repeats span residues Y288–K310 and Y311–K333. Residues A416–N496 form a disordered region. S440 is modified (phosphoserine). Residues S448–S457 are compositionally biased toward polar residues. T451 carries the post-translational modification Phosphothreonine. S457 is subject to Phosphoserine. At T471 the chain carries Phosphothreonine. S475 and S506 each carry phosphoserine. 2 disordered regions span residues C526–G597 and H624–G649. Basic and acidic residues predominate over residues L639–G649. A phosphoserine mark is found at S703 and S710. A helical; Anchor for type IV membrane protein transmembrane segment spans residues L728–I748.

It belongs to the junctophilin family. In terms of tissue distribution, specifically expressed in brain.

It is found in the cell membrane. The protein localises to the endoplasmic reticulum membrane. Junctophilins contribute to the formation of junctional membrane complexes (JMCs) which link the plasma membrane with the endoplasmic or sarcoplasmic reticulum in excitable cells. Provides a structural foundation for functional cross-talk between the cell surface and intracellular calcium release channels. JPH3 is brain-specific and appears to have an active role in certain neurons involved in motor coordination and memory. The chain is Junctophilin-3 (JPH3) from Homo sapiens (Human).